A 405-amino-acid polypeptide reads, in one-letter code: Tryptophan synthase beta chain (405 aa).

An N6-(pyridoxal phosphate)lysine modification is found at K98.

Belongs to the TrpB family. In terms of assembly, tetramer of two alpha and two beta chains. It depends on pyridoxal 5'-phosphate as a cofactor.

The catalysed reaction is (1S,2R)-1-C-(indol-3-yl)glycerol 3-phosphate + L-serine = D-glyceraldehyde 3-phosphate + L-tryptophan + H2O. It functions in the pathway amino-acid biosynthesis; L-tryptophan biosynthesis; L-tryptophan from chorismate: step 5/5. In terms of biological role, the beta subunit is responsible for the synthesis of L-tryptophan from indole and L-serine. This Xanthomonas oryzae pv. oryzae (strain MAFF 311018) protein is Tryptophan synthase beta chain.